The primary structure comprises 488 residues: BRAP2 RING ZnF UBP domain-containing protein 1 (488 aa).

Residues 174–214 (CPICLERLDPDTSGIVSTLCDHSFQCSCTSKWTYLSCQVCR) form an RING-type; degenerate zinc finger. The UBP-type; degenerate zinc-finger motif lies at 208–301 (LSCQVCRLCQ…GKSVEMSTSC (94 aa)). Residues Cys225, Cys228, Cys237, Cys240, Cys245, His252, His256, and His262 each contribute to the Zn(2+) site. The stretch at 370–418 (EQIVVNTMQELQNKIEKCEEEKSGITEVNTKLIKEQDTWRKKAKEIEER) forms a coiled coil. The segment at 453-488 (MSSDTDGIREGTVLPVPISPEPVSSVRRQKKSNRRK) is disordered. Low complexity predominate over residues 465-478 (VLPVPISPEPVSSV). Residues 479-488 (RRQKKSNRRK) are compositionally biased toward basic residues.

Component of the heteromeric E3 ligase complex made of BRIZ1 and BRIZ2. Forms heterooligomers with BRIZ2 via coiled-coil domains.

The enzyme catalyses S-ubiquitinyl-[E2 ubiquitin-conjugating enzyme]-L-cysteine + [acceptor protein]-L-lysine = [E2 ubiquitin-conjugating enzyme]-L-cysteine + N(6)-ubiquitinyl-[acceptor protein]-L-lysine.. The protein operates within protein modification; protein ubiquitination. Functionally, RING-type ubiquitin E3 ligase required for seed germination and post-germination growth. The protein is BRAP2 RING ZnF UBP domain-containing protein 1 of Arabidopsis thaliana (Mouse-ear cress).